A 143-amino-acid chain; its full sequence is Large ribosomal subunit protein eL28z (143 aa).

The protein belongs to the eukaryotic ribosomal protein eL28 family. As to quaternary structure, component of the large ribosomal subunit. In terms of tissue distribution, expressed in seedlings, roots, stems, leaves, inflorescences and siliques.

The protein resides in the cytoplasm. Its subcellular location is the nucleus. The protein localises to the nucleolus. It is found in the nucleoplasm. Functionally, component of the large ribosomal subunit. Essential in leaf polarity establishment, probably having a role for translation in leaf dorsoventral patterning to specify leaf adaxial identity. This chain is Large ribosomal subunit protein eL28z, found in Arabidopsis thaliana (Mouse-ear cress).